The following is a 139-amino-acid chain: Actin-depolymerizing factor 3 (139 aa).

Positions G7–R139 constitute an ADF-H domain.

The protein belongs to the actin-binding proteins ADF family. As to expression, expressed in all tissues except pollen.

Its subcellular location is the cytoplasm. Actin-depolymerizing protein. Severs actin filaments (F-actin) and binds to actin monomers. In Zea mays (Maize), this protein is Actin-depolymerizing factor 3 (ADF3).